The primary structure comprises 142 residues: MLQPKRTKHRKMFRIRHDKKDAFKGNKVSFGEYGLQATTSAWITARQIESARIAATRRMGREGQVIIRIFPHLSKTSKPIGVRMGSGKGSPEKWYSVVKRQTMMFEVSGIKPEVAKDALRLAGHKLPVKWRIVEASPKEEVI.

It belongs to the universal ribosomal protein uL16 family. Part of the 50S ribosomal subunit.

In terms of biological role, binds 23S rRNA and is also seen to make contacts with the A and possibly P site tRNAs. The sequence is that of Large ribosomal subunit protein uL16 from Mycoplasmopsis pulmonis (strain UAB CTIP) (Mycoplasma pulmonis).